A 485-amino-acid chain; its full sequence is Alginate biosynthesis protein AlgA (485 aa).

This sequence belongs to the mannose-6-phosphate isomerase type 2 family. Monomer. It depends on Co(2+) as a cofactor.

It catalyses the reaction D-mannose 6-phosphate = D-fructose 6-phosphate. The catalysed reaction is alpha-D-mannose 1-phosphate + GTP + H(+) = GDP-alpha-D-mannose + diphosphate. Its pathway is nucleotide-sugar biosynthesis; GDP-alpha-D-mannose biosynthesis; GDP-alpha-D-mannose from alpha-D-mannose 1-phosphate (GTP route): step 1/1. The protein operates within nucleotide-sugar biosynthesis; GDP-alpha-D-mannose biosynthesis; alpha-D-mannose 1-phosphate from D-fructose 6-phosphate: step 1/2. Functionally, produces a precursor for alginate polymerization. The alginate layer provides a protective barrier against host immune defenses and antibiotics. This chain is Alginate biosynthesis protein AlgA (algA), found in Pseudomonas putida (strain ATCC 47054 / DSM 6125 / CFBP 8728 / NCIMB 11950 / KT2440).